Here is a 180-residue protein sequence, read N- to C-terminus: Protein Flattop (180 aa).

Positions 111 to 180 are disordered; the sequence is PQISGKASGK…AGDKVLQAQS (70 aa).

This sequence belongs to the Flattop family.

It localises to the cytoplasm. The protein localises to the cytoskeleton. Its subcellular location is the cilium basal body. The protein resides in the cell projection. It is found in the cilium. It localises to the apical cell membrane. The protein localises to the cilium axoneme. Microtubule inner protein (MIP) part of the dynein-decorated doublet microtubules (DMTs) in cilia axoneme. Acts as a regulator of cilium basal body docking and positioning in mono- and multiciliated cells. Regulates basal body docking and cilia formation in multiciliated lung cells. Regulates kinocilium positioning and stereocilia bundle morphogenesis in the inner ear. This is Protein Flattop from Xenopus laevis (African clawed frog).